The following is a 225-amino-acid chain: UPF0758 protein Shewmr4_3597 (225 aa).

The MPN domain maps to 102–224; it reads VLTNPDLTRD…IVSFAERGWI (123 aa). Positions 173, 175, and 186 each coordinate Zn(2+). A JAMM motif motif is present at residues 173 to 186; it reads HNHPSGIAEPSQAD.

It belongs to the UPF0758 family.

The protein is UPF0758 protein Shewmr4_3597 of Shewanella sp. (strain MR-4).